A 113-amino-acid polypeptide reads, in one-letter code: UPF0102 protein Dgeo_1894 (113 aa).

It belongs to the UPF0102 family.

This Deinococcus geothermalis (strain DSM 11300 / CIP 105573 / AG-3a) protein is UPF0102 protein Dgeo_1894.